We begin with the raw amino-acid sequence, 212 residues long: Pyridoxine/pyridoxamine 5'-phosphate oxidase (212 aa).

Substrate-binding positions include 8–11 (RREY) and Lys-66. Residues 61–66 (RIVLLK), 76–77 (FT), Arg-82, Lys-83, and Gln-105 each bind FMN. 3 residues coordinate substrate: Tyr-123, Arg-127, and Ser-131. FMN-binding positions include 140–141 (QS) and Trp-185. 191–193 (RLH) contributes to the substrate binding site. FMN is bound at residue Arg-195.

This sequence belongs to the pyridoxamine 5'-phosphate oxidase family. As to quaternary structure, homodimer. The cofactor is FMN.

The enzyme catalyses pyridoxamine 5'-phosphate + O2 + H2O = pyridoxal 5'-phosphate + H2O2 + NH4(+). It catalyses the reaction pyridoxine 5'-phosphate + O2 = pyridoxal 5'-phosphate + H2O2. Its pathway is cofactor metabolism; pyridoxal 5'-phosphate salvage; pyridoxal 5'-phosphate from pyridoxamine 5'-phosphate: step 1/1. The protein operates within cofactor metabolism; pyridoxal 5'-phosphate salvage; pyridoxal 5'-phosphate from pyridoxine 5'-phosphate: step 1/1. Catalyzes the oxidation of either pyridoxine 5'-phosphate (PNP) or pyridoxamine 5'-phosphate (PMP) into pyridoxal 5'-phosphate (PLP). This Shewanella putrefaciens (strain CN-32 / ATCC BAA-453) protein is Pyridoxine/pyridoxamine 5'-phosphate oxidase.